The sequence spans 326 residues: Aspartate carbamoyltransferase catalytic subunit (326 aa).

Carbamoyl phosphate is bound by residues Arg65 and Thr66. Lys93 contacts L-aspartate. Residues Arg115, His143, and Gln146 each contribute to the carbamoyl phosphate site. Arg176 and Arg230 together coordinate L-aspartate. 2 residues coordinate carbamoyl phosphate: Gly271 and Pro272.

Belongs to the aspartate/ornithine carbamoyltransferase superfamily. ATCase family. Heterododecamer (2C3:3R2) of six catalytic PyrB chains organized as two trimers (C3), and six regulatory PyrI chains organized as three dimers (R2).

It carries out the reaction carbamoyl phosphate + L-aspartate = N-carbamoyl-L-aspartate + phosphate + H(+). It participates in pyrimidine metabolism; UMP biosynthesis via de novo pathway; (S)-dihydroorotate from bicarbonate: step 2/3. Catalyzes the condensation of carbamoyl phosphate and aspartate to form carbamoyl aspartate and inorganic phosphate, the committed step in the de novo pyrimidine nucleotide biosynthesis pathway. This is Aspartate carbamoyltransferase catalytic subunit from Mesorhizobium japonicum (strain LMG 29417 / CECT 9101 / MAFF 303099) (Mesorhizobium loti (strain MAFF 303099)).